Consider the following 460-residue polypeptide: Zinc transporter 6 (460 aa).

Over 1-33 (MGTIHLFRKSQRSLVGKLTHEFRLVAADRRSWK) the chain is Cytoplasmic. Residues 34–54 (ILLFGAINLICIGFLLMWCSS) traverse the membrane as a helical segment. Residues 55–64 (TNSIALTAYT) are Extracellular-facing. A helical membrane pass occupies residues 65-85 (YLTIFDLFSLITCLISYWVMV). At 86–98 (KKPSPVYSFGFER) the chain is on the cytoplasmic side. Residues 99–119 (FEVLAVFASTVLAQLGALFIL) traverse the membrane as a helical segment. The Extracellular segment spans residues 120 to 134 (KESAERFLEQPEIHT). A helical transmembrane segment spans residues 135–155 (GRLLVGTFVALFFNLFTMLSV). The Cytoplasmic portion of the chain corresponds to 156-200 (RNKPFAYVSEAASTSWLQEHVADLSRSICGIIPGLSSIFLPRMNP). The chain crosses the membrane as a helical span at residues 201 to 221 (FVLIDIAGALALCITYMLIEI). Residues 222–228 (NNYYAVD) are Extracellular-facing. A helical transmembrane segment spans residues 229–249 (TASAIAIALMTFGTMYPMSVY). Over 250–460 (SGKVLLQTTP…GTNTRGQSRP (211 aa)) the chain is Cytoplasmic. Residues 372–392 (PVTSTPAKPSSPPPEFSFNTP) form a disordered region.

The protein belongs to the cation diffusion facilitator (CDF) transporter (TC 2.A.4) family. SLC30A subfamily. As to quaternary structure, heterodimer with SLC30A5; form a functional zinc ion transmembrane transporter.

The protein localises to the golgi apparatus. Its subcellular location is the trans-Golgi network membrane. In terms of biological role, has probably no intrinsic transporter activity but together with SLC30A5 forms a functional zinc ion:proton antiporter heterodimer, mediating zinc entry into the lumen of organelles along the secretory pathway. As part of that zinc ion:proton antiporter, contributes to zinc ion homeostasis within the early secretory pathway and regulates the activation and folding of enzymes like alkaline phosphatases and enzymes involved in phosphatidylinositol glycan anchor biosynthesis. The protein is Zinc transporter 6 (SLC30A6) of Gallus gallus (Chicken).